The primary structure comprises 1101 residues: Type II inositol polyphosphate 5-phosphatase 15 (1101 aa).

The span at 31 to 40 (RSAYSSSSSS) shows a compositional bias: low complexity. The segment at 31-54 (RSAYSSSSSSGDDESQPSVDDSNK) is disordered. WD repeat units follow at residues 121–162 (LRET…GSGR), 180–219 (FGSA…GIEE), 225–263 (AHRG…GKSL), 403–432 (DDSR…MRWD), 433–481 (GNGN…GGWV), and 483–519 (HSGP…PLDN). Catalytic stretches follow at residues 749–765 (DMVI…DDIT) and 828–843 (KKRI…YRDN). A Glycyl lysine isopeptide (Lys-Gly) (interchain with G-Cter in ubiquitin) cross-link involves residue lysine 907.

This sequence belongs to the inositol polyphosphate 5-phosphatase family. Mg(2+) serves as cofactor. Predominantly expressed in interfascicular fibers and vascular bundles. Expressed in seedlings, stems, roots and flowers. Expressed at lower level in mature leaves.

The enzyme catalyses a 1,2-diacyl-sn-glycero-3-phospho-(1D-myo-inositol-4,5-bisphosphate) + H2O = a 1,2-diacyl-sn-glycero-3-phospho-(1D-myo-inositol 4-phosphate) + phosphate. It catalyses the reaction a 1,2-diacyl-sn-glycero-3-phospho-(1D-myo-inositol-3,4,5-trisphosphate) + H2O = a 1,2-diacyl-sn-glycero-3-phospho-(1D-myo-inositol-3,4-bisphosphate) + phosphate. It carries out the reaction 1D-myo-inositol 1,4,5-trisphosphate + H2O = 1D-myo-inositol 1,4-bisphosphate + phosphate. Its function is as follows. Has phosphatase activity toward PtdIns(4,5)P2, PtdIns(3,4,5)P3 and Ins(1,4,5)P3. Has a higher substrate affinity toward PtdIns(4,5)P2. Required for secondary wall synthesis and actin organization in fiber cells. This chain is Type II inositol polyphosphate 5-phosphatase 15, found in Arabidopsis thaliana (Mouse-ear cress).